Here is a 989-residue protein sequence, read N- to C-terminus: Bifunctional glutamine synthetase adenylyltransferase/adenylyl-removing enzyme (989 aa).

Residues 1 to 474 form an adenylyl removase region; the sequence is MNSSAIDADI…HYGKLFEGDP (474 aa). Positions 480–989 are adenylyl transferase; it reads LPIDYAGGPD…FNRLIGGDSA (510 aa).

It belongs to the GlnE family. Requires Mg(2+) as cofactor.

It carries out the reaction [glutamine synthetase]-O(4)-(5'-adenylyl)-L-tyrosine + phosphate = [glutamine synthetase]-L-tyrosine + ADP. It catalyses the reaction [glutamine synthetase]-L-tyrosine + ATP = [glutamine synthetase]-O(4)-(5'-adenylyl)-L-tyrosine + diphosphate. Functionally, involved in the regulation of glutamine synthetase GlnA, a key enzyme in the process to assimilate ammonia. When cellular nitrogen levels are high, the C-terminal adenylyl transferase (AT) inactivates GlnA by covalent transfer of an adenylyl group from ATP to specific tyrosine residue of GlnA, thus reducing its activity. Conversely, when nitrogen levels are low, the N-terminal adenylyl removase (AR) activates GlnA by removing the adenylyl group by phosphorolysis, increasing its activity. The regulatory region of GlnE binds the signal transduction protein PII (GlnB) which indicates the nitrogen status of the cell. This is Bifunctional glutamine synthetase adenylyltransferase/adenylyl-removing enzyme from Rhodopseudomonas palustris (strain BisB5).